The chain runs to 970 residues: Bifunctional glutamine synthetase adenylyltransferase/adenylyl-removing enzyme (970 aa).

The tract at residues 1–454 is adenylyl removase; that stretch reads MNSLPPRPSL…HFQQVFAAPQ (454 aa). Positions 468–970 are adenylyl transferase; the sequence is QAVLASIWAG…WRRVMEEGKA (503 aa).

It belongs to the GlnE family. Requires Mg(2+) as cofactor.

The catalysed reaction is [glutamine synthetase]-O(4)-(5'-adenylyl)-L-tyrosine + phosphate = [glutamine synthetase]-L-tyrosine + ADP. The enzyme catalyses [glutamine synthetase]-L-tyrosine + ATP = [glutamine synthetase]-O(4)-(5'-adenylyl)-L-tyrosine + diphosphate. Involved in the regulation of glutamine synthetase GlnA, a key enzyme in the process to assimilate ammonia. When cellular nitrogen levels are high, the C-terminal adenylyl transferase (AT) inactivates GlnA by covalent transfer of an adenylyl group from ATP to specific tyrosine residue of GlnA, thus reducing its activity. Conversely, when nitrogen levels are low, the N-terminal adenylyl removase (AR) activates GlnA by removing the adenylyl group by phosphorolysis, increasing its activity. The regulatory region of GlnE binds the signal transduction protein PII (GlnB) which indicates the nitrogen status of the cell. The protein is Bifunctional glutamine synthetase adenylyltransferase/adenylyl-removing enzyme of Thioalkalivibrio sulfidiphilus (strain HL-EbGR7).